Consider the following 836-residue polypeptide: MEMTSGSLGNGIPEAMGQNRGNIKRCLEKYIENGRRVMKLNELMDEMEIVINDVTQRRRVMEGDLGKILCFTQAVVIPPNVAFAVRGTPGNWQYVKVNSSNLSVEALSSTQYLKLKEFLFDENWANDENALEVDFGALDFTLPWLSLSSSIGNGLSFVSSKLGGRLNDNPQSLVDYLLSLEHQGEKLMMNETLNTARKLEMSLILADVFLSELPKDTPFQAFELRFKECGFEKGWGESAGRVKETMRILSEILQAPDPQNIDRFFARVPRIFNVVIFSVHGYFGQTDVLGLPDTGGQVVYILDQVKALEDELLQRINSQGLNFKPQILVVTRLIPDAKKTKCNQELEPIFGTKYSNILRIPFVTENGILRRWVSRFDIYPYLERFTKDATTKILDILEGKPDLIIGNYTDGNLVASLMANKLGITQATIAHALEKTKYEDSDIKWKEFDPKYHFSSQFTADLISMNSADFIIASTYQEIAGSKERAGQYESHMSFTVPGLYRVVSGINVFDPRFNIAAPGADDSIYFPFTAQDRRFTKFYTSIDELLYSQSENDEHIGYLVDKKKPIIFSMARLDVVKNLTGLTEWYAKNKRLRDLVNLVIVGGFFDASKSKDREEISEIKKMHSLIEKYQLKGQFRWITAQTDRTRNGELYRSIADTRGAFVQPAHYEAFGLTVIEAMSCGLVTFATNQGGPAEIIVDGVSGFHIDPSNGEESSDKIADFFEKSGMDPDYWNMFSNEGLQRINECYTWKIYANKVINMGSTYSYWRHLNKDQKLAKQRYIHSFYNLQYRNLVKTIPILSDIPEPPPLPPKPLVKPSASKGSKRTQPRLSFRLFGA.

The GT-B glycosyltransferase stretch occupies residues 270 to 748 (RIFNVVIFSV…GLQRINECYT (479 aa)). Positions 805–836 (PPPLPPKPLVKPSASKGSKRTQPRLSFRLFGA) are disordered.

It belongs to the glycosyltransferase 1 family. Plant sucrose synthase subfamily. Detected in the whole plant but more precisely confined to the vasculature in cotyledons, leaves, petals, anthers and roots. Also detected in developing siliques, young immature rosette and cauline leaves.

Its subcellular location is the secreted. The protein resides in the cell wall. The enzyme catalyses an NDP-alpha-D-glucose + D-fructose = a ribonucleoside 5'-diphosphate + sucrose + H(+). In terms of biological role, sucrose-cleaving enzyme that provides UDP-glucose and fructose for various metabolic pathways. Functions in callose synthesis at the site of phloem sieve elements. In Arabidopsis thaliana (Mouse-ear cress), this protein is Sucrose synthase 5 (SUS5).